The chain runs to 513 residues: Putative ribose/galactose/methyl galactoside import ATP-binding protein (513 aa).

ABC transporter domains are found at residues 24 to 260 and 270 to 510; these read LSAE…VGRE and VPIG…VMEL. 56-63 contributes to the ATP binding site; that stretch reads GENGAGKS.

This sequence belongs to the ABC transporter superfamily. Carbohydrate importer 2 (CUT2) (TC 3.A.1.2) family.

It localises to the cell inner membrane. It catalyses the reaction D-ribose(out) + ATP + H2O = D-ribose(in) + ADP + phosphate + H(+). It carries out the reaction D-galactose(out) + ATP + H2O = D-galactose(in) + ADP + phosphate + H(+). Part of an ABC transporter complex involved in carbohydrate import. Could be involved in ribose, galactose and/or methyl galactoside import. Responsible for energy coupling to the transport system. This Rhizobium johnstonii (strain DSM 114642 / LMG 32736 / 3841) (Rhizobium leguminosarum bv. viciae) protein is Putative ribose/galactose/methyl galactoside import ATP-binding protein.